A 126-amino-acid chain; its full sequence is Histone H2B type 1-N (126 aa).

The span at 1 to 12 shows a compositional bias: low complexity; the sequence is MPEPSKSAPAPK. Residues 1–36 are disordered; that stretch reads MPEPSKSAPAPKKGSKKAVTKAQKKDGKKRKRSRKE. Pro-2 is modified (N-acetylproline). Position 3 is an ADP-ribosyl glutamic acid (Glu-3). An N6-(2-hydroxyisobutyryl)lysine; alternate modification is found at Lys-6. Lys-6 is modified (N6-(beta-hydroxybutyryl)lysine; alternate). The residue at position 6 (Lys-6) is an N6-acetyllysine; alternate. Lys-6 bears the N6-butyryllysine; alternate mark. At Lys-6 the chain carries N6-crotonyllysine; alternate. Lys-6 is subject to N6-lactoyllysine; alternate. Residue Lys-6 forms a Glycyl lysine isopeptide (Lys-Gly) (interchain with G-Cter in SUMO2); alternate linkage. Ser-7 bears the ADP-ribosylserine mark. Lys-12 is modified (N6-(beta-hydroxybutyryl)lysine; alternate). Lys-12 and Lys-13 each carry N6-acetyllysine; alternate. N6-crotonyllysine; alternate occurs at positions 12 and 13. Lys-12 carries the N6-lactoyllysine; alternate modification. Lys-13 is subject to N6-(2-hydroxyisobutyryl)lysine; alternate. Position 15 is a phosphoserine; by STK4/MST1 (Ser-15). Residues Lys-16, Lys-17, Lys-21, and Lys-24 each carry the N6-acetyllysine; alternate modification. An N6-crotonyllysine; alternate mark is found at Lys-16, Lys-17, Lys-21, and Lys-24. An N6-lactoyllysine; alternate mark is found at Lys-16, Lys-17, Lys-21, and Lys-24. An N6-(beta-hydroxybutyryl)lysine; alternate mark is found at Lys-17 and Lys-21. An N6-glutaryllysine; alternate modification is found at Lys-17. Residues Lys-21 and Lys-24 each carry the N6-(2-hydroxyisobutyryl)lysine; alternate modification. Lys-21 carries the post-translational modification N6-butyryllysine; alternate. Residue Lys-21 forms a Glycyl lysine isopeptide (Lys-Gly) (interchain with G-Cter in SUMO2); alternate linkage. At Lys-25 the chain carries N6-(2-hydroxyisobutyryl)lysine. Lys-35 carries the N6-(2-hydroxyisobutyryl)lysine; alternate modification. An N6-(beta-hydroxybutyryl)lysine; alternate modification is found at Lys-35. Position 35 is an N6-crotonyllysine; alternate (Lys-35). Lys-35 is subject to N6-glutaryllysine; alternate. Lys-35 is subject to N6-succinyllysine; alternate. Residue Lys-35 forms a Glycyl lysine isopeptide (Lys-Gly) (interchain with G-Cter in ubiquitin); alternate linkage. Glu-36 carries the post-translational modification PolyADP-ribosyl glutamic acid. Ser-37 carries the post-translational modification Phosphoserine; by AMPK. Residues Lys-44, Lys-47, and Lys-58 each carry the N6-(2-hydroxyisobutyryl)lysine; alternate modification. Residue Lys-44 is modified to N6-lactoyllysine; alternate. Lys-44 and Lys-47 each carry N6-glutaryllysine; alternate. Lys-47 carries the post-translational modification N6-methyllysine; alternate. Residue Lys-58 is modified to N6,N6-dimethyllysine; alternate. Position 80 is a dimethylated arginine (Arg-80). Residue Lys-86 is modified to N6-(2-hydroxyisobutyryl)lysine; alternate. At Lys-86 the chain carries N6-(beta-hydroxybutyryl)lysine; alternate. Residue Lys-86 is modified to N6-acetyllysine; alternate. At Lys-86 the chain carries N6-lactoyllysine; alternate. An N6,N6,N6-trimethyllysine; alternate modification is found at Lys-86. 2 positions are modified to omega-N-methylarginine: Arg-87 and Arg-93. Position 109 is an N6-(2-hydroxyisobutyryl)lysine; alternate (Lys-109). Lys-109 carries the post-translational modification N6-lactoyllysine; alternate. Lys-109 carries the N6-glutaryllysine; alternate modification. Position 109 is an N6-methyllysine; alternate (Lys-109). O-linked (GlcNAc) serine glycosylation occurs at Ser-113. Phosphothreonine is present on Thr-116. An N6-(2-hydroxyisobutyryl)lysine; alternate mark is found at Lys-117 and Lys-121. Lys-117 and Lys-121 each carry N6-(beta-hydroxybutyryl)lysine; alternate. N6-lactoyllysine; alternate occurs at positions 117 and 121. Lys-117 and Lys-121 each carry N6-glutaryllysine; alternate. N6-succinyllysine; alternate is present on residues Lys-117 and Lys-121. At Lys-117 the chain carries N6-malonyllysine; alternate. Position 117 is an N6-methylated lysine; alternate (Lys-117). A Glycyl lysine isopeptide (Lys-Gly) (interchain with G-Cter in ubiquitin); alternate cross-link involves residue Lys-121.

This sequence belongs to the histone H2B family. The nucleosome is a histone octamer containing two molecules each of H2A, H2B, H3 and H4 assembled in one H3-H4 heterotetramer and two H2A-H2B heterodimers. The octamer wraps approximately 147 bp of DNA. Monoubiquitination at Lys-35 (H2BK34Ub) by the MSL1/MSL2 dimer is required for histone H3 'Lys-4' (H3K4me) and 'Lys-79' (H3K79me) methylation and transcription activation at specific gene loci, such as HOXA9 and MEIS1 loci. Similarly, monoubiquitination at Lys-121 (H2BK120Ub) by the RNF20/40 complex gives a specific tag for epigenetic transcriptional activation and is also prerequisite for histone H3 'Lys-4' and 'Lys-79' methylation. It also functions cooperatively with the FACT dimer to stimulate elongation by RNA polymerase II. H2BK120Ub also acts as a regulator of mRNA splicing: deubiquitination by USP49 is required for efficient cotranscriptional splicing of a large set of exons. In terms of processing, phosphorylation at Ser-37 (H2BS36ph) by AMPK in response to stress promotes transcription. Phosphorylated on Ser-15 (H2BS14ph) by STK4/MST1 during apoptosis; which facilitates apoptotic chromatin condensation. Also phosphorylated on Ser-15 in response to DNA double strand breaks (DSBs), and in correlation with somatic hypermutation and immunoglobulin class-switch recombination. Post-translationally, glcNAcylation at Ser-113 promotes monoubiquitination of Lys-121. It fluctuates in response to extracellular glucose, and associates with transcribed genes. ADP-ribosylated by PARP1 or PARP2 on Ser-7 (H2BS6ADPr) in response to DNA damage. H2BS6ADPr promotes recruitment of CHD1L. Mono-ADP-ribosylated on Glu-3 (H2BE2ADPr) by PARP3 in response to single-strand breaks. Poly ADP-ribosylation on Glu-36 (H2BE35ADPr) by PARP1 regulates adipogenesis: it inhibits phosphorylation at Ser-37 (H2BS36ph), thereby blocking expression of pro-adipogenetic genes. In terms of processing, crotonylation (Kcr) is specifically present in male germ cells and marks testis-specific genes in post-meiotic cells, including X-linked genes that escape sex chromosome inactivation in haploid cells. Crotonylation marks active promoters and enhancers and confers resistance to transcriptional repressors. It is also associated with post-meiotically activated genes on autosomes. Post-translationally, lactylated in macrophages by EP300/P300 by using lactoyl-CoA directly derived from endogenous or exogenous lactate, leading to stimulates gene transcription.

It localises to the nucleus. The protein resides in the chromosome. Its function is as follows. Core component of nucleosome. Nucleosomes wrap and compact DNA into chromatin, limiting DNA accessibility to the cellular machineries which require DNA as a template. Histones thereby play a central role in transcription regulation, DNA repair, DNA replication and chromosomal stability. DNA accessibility is regulated via a complex set of post-translational modifications of histones, also called histone code, and nucleosome remodeling. The protein is Histone H2B type 1-N of Homo sapiens (Human).